The chain runs to 358 residues: UPF0725 protein At4g29550 (358 aa).

Residues 31 to 82 are disordered; the sequence is LNKHPPSGSGWTDEDDDNDDVFSSSFISKEELSDAVHNDPPSGWTDEDDDDQ. Basic and acidic residues predominate over residues 58–67; it reads SKEELSDAVH.

It belongs to the UPF0725 (EMB2204) family.

The chain is UPF0725 protein At4g29550 from Arabidopsis thaliana (Mouse-ear cress).